Here is a 291-residue protein sequence, read N- to C-terminus: MEYPWDDLTLAFSRTSMFPFFDIAHYLVSVMALKQRPGAVAAAWSNPLSSWLSAMLHCFGGGILSCILLAEPPLKFLTNHTNILLASSIWYIVFFCPRDLVSQGYSYQPIQLLAAGMKEVTRTWKIVGGVAHANGYYRNGWIVMIAVGWARGAGGAIITACEQLLKGDWKPEGDEWLKMSFPCKVTLLGSIMFTFQHTRHLAISKHDLMFLYTIFLVTIKVTMMMTKDAAVTLTPFEDTLTRMLFGRQQQQFSLSEKKAEVKPSSNGSASSASKRGTEPPSSAKRHAKKED.

Over 1 to 16 (MEYPWDDLTLAFSRTS) the chain is Lumenal. Residues 17 to 33 (MFPFFDIAHYLVSVMAL) traverse the membrane as a helical segment. Residues 34–47 (KQRPGAVAAAWSNP) lie on the Cytoplasmic side of the membrane. The helical transmembrane segment at 48 to 69 (LSSWLSAMLHCFGGGILSCILL) threads the bilayer. The Lumenal segment spans residues 70–80 (AEPPLKFLTNH). A helical transmembrane segment spans residues 81–99 (TNILLASSIWYIVFFCPRD). Residues 100–103 (LVSQ) are Cytoplasmic-facing. A helical membrane pass occupies residues 104–122 (GYSYQPIQLLAAGMKEVTR). A 1,2-diacyl-sn-glycero-3-phospho-(1D-myo-inositol-4,5-bisphosphate) is bound by residues K118 and R122. The Lumenal segment spans residues 123-138 (TWKIVGGVAHANGYYR). Residues 139–156 (NGWIVMIAVGWARGAGGA) form a helical membrane-spanning segment. Residues 157-179 (IITACEQLLKGDWKPEGDEWLKM) lie on the Cytoplasmic side of the membrane. A helical membrane pass occupies residues 180-197 (SFPCKVTLLGSIMFTFQH). The Lumenal portion of the chain corresponds to 198–206 (TRHLAISKH). Residues 207-225 (DLMFLYTIFLVTIKVTMMM) form a helical membrane-spanning segment. At 226–291 (TKDAAVTLTP…SAKRHAKKED (66 aa)) the chain is on the cytoplasmic side. Residues 254–291 (LSEKKAEVKPSSNGSASSASKRGTEPPSSAKRHAKKED) form a disordered region. Residues 264–273 (SSNGSASSAS) show a composition bias toward low complexity.

Belongs to the TMEM38 family. As to quaternary structure, homotrimer; conformation seems to be controled by binding to diacylglycerol (DAG).

The protein localises to the endoplasmic reticulum membrane. The catalysed reaction is K(+)(in) = K(+)(out). With respect to regulation, channel activity is activated by increased cytosolic Ca(2+) levels and blocked by luminal high Ca(2+) levels. Functionally, intracellular monovalent cation channel required for maintenance of rapid intracellular calcium release. Acts as a potassium counter-ion channel that functions in synchronization with calcium release from intracellular stores. Activated by increased cytosolic Ca(2+) levels. The protein is Trimeric intracellular cation channel type B (Tmem38b) of Rattus norvegicus (Rat).